We begin with the raw amino-acid sequence, 699 residues long: uncharacterized protein (699 aa).

3 disordered regions span residues 175–208, 289–364, and 539–603; these read PTLG…ASLS, PTAK…EEPD, and RAKE…KEYL. A compositionally biased stretch (basic and acidic residues) spans 183-194; sequence PSKHGDHSDSKT. A compositionally biased stretch (polar residues) spans 195-208; it reads YESPISNSQAASLS. Residues 308–322 show a composition bias toward basic residues; sequence SKHKKRPKRLSKFKQ. The span at 323 to 338 shows a compositional bias: basic and acidic residues; that stretch reads AKLETKKSGNKDHATS. Polar residues-rich tracts occupy residues 339–360 and 548–573; these read SEKL…SSSI and HSNA…NTKL. Basic and acidic residues predominate over residues 574–603; that stretch reads NPKEEDKSTVESELKAPPKEKSSETSKEYL.

Its subcellular location is the cytoplasm. This is an uncharacterized protein from Schizosaccharomyces pombe (strain 972 / ATCC 24843) (Fission yeast).